A 75-amino-acid chain; its full sequence is Small ribosomal subunit protein bS18 (75 aa).

It belongs to the bacterial ribosomal protein bS18 family. Part of the 30S ribosomal subunit. Forms a tight heterodimer with protein bS6.

Functionally, binds as a heterodimer with protein bS6 to the central domain of the 16S rRNA, where it helps stabilize the platform of the 30S subunit. This is Small ribosomal subunit protein bS18 from Shewanella denitrificans (strain OS217 / ATCC BAA-1090 / DSM 15013).